A 470-amino-acid chain; its full sequence is MKLPSGLGSIHFVGIGGIGMSGIAEVLHNLGYEVQGSDVADSANVKRLRDLGIKVMIGHSAVNVDDADVVVVSSAIKRDNPELVAARTKRLPVVRRAEMLAELMRLKSCVSIAGTHGKTTTTSMVAALLDAGNFDPTVINGGIINAYGTNARLGDGNWMVVEADESDGTFLKLPTEVAIVTNVDPEHLDHFKTFDKVQDAFKTFVENVPFYGFAVMCIDHPVVQALVGRIEDRRVITYGENPQADVRLVDVDLKGGITRFGVVFRNRAGETVHEISGLKLPMPGKHNALNATAAIAVAHELKVPDDKIIEAIANFGGVKRRFTRTGEWNGVTVFDDYGHHPVEIAAVLKAARAASEGQVIAVVQPHRYSRLASLFDEFCTCFNDADHVVVAPVYAAGETPIEGADRDHLVQGLIAHGHRSVTALEGPERLAQVVGGLAKPGDYVICLGAGSISGWAYALPGELAALKPAA.

114–120 (GTHGKTT) contributes to the ATP binding site.

Belongs to the MurCDEF family.

It is found in the cytoplasm. It carries out the reaction UDP-N-acetyl-alpha-D-muramate + L-alanine + ATP = UDP-N-acetyl-alpha-D-muramoyl-L-alanine + ADP + phosphate + H(+). The protein operates within cell wall biogenesis; peptidoglycan biosynthesis. Functionally, cell wall formation. In Xanthobacter autotrophicus (strain ATCC BAA-1158 / Py2), this protein is UDP-N-acetylmuramate--L-alanine ligase.